The primary structure comprises 160 residues: Twist-related protein 2 (160 aa).

Residues 1 to 63 form a disordered region; it reads MEEGSSSPVS…GSPSAQSFEE (63 aa). A compositionally biased stretch (basic residues) spans 27–37; sequence KRFGRKRRYSK. The 52-residue stretch at 66 to 117 folds into the bHLH domain; sequence SQRILANVRERQRTQSLNEAFAALRKIIPTLPSDKLSKIQTLKLAARYIDFL.

As to quaternary structure, efficient DNA binding requires dimerization with another bHLH protein. Forms a heterodimer with TCF3/E12. Also interacts with MEF2C. As to expression, in the embryo, highly expressed in chondrogenic cells. In embryonic skin, expressed in the undifferentiated mesenchymal layer beneath the epidermis which later develops into the dermis. Expressed in early myeloid cells but not in lymphoid cells in the liver. Expression also detected in the secretory ependymal epithelium of the choroid plexus primordium. In the adult, expressed in secreting glandular tissues and tubules.

It localises to the nucleus. Its subcellular location is the cytoplasm. Binds to the E-box consensus sequence 5'-CANNTG-3' as a heterodimer and inhibits transcriptional activation by MYOD1, MYOG, MEF2A and MEF2C. Also represses expression of pro-inflammatory cytokines such as TNFA and IL1B. Involved in postnatal glycogen storage and energy metabolism. Inhibits the premature or ectopic differentiation of preosteoblast cells during osteogenesis, possibly by changing the internal signal transduction response of osteoblasts to external growth factors. In Homo sapiens (Human), this protein is Twist-related protein 2 (TWIST2).